Consider the following 250-residue polypeptide: Beta-crystallin B1 (250 aa).

The segment at 1 to 47 (MSQVAKAAATTAVNPGPDGKGKGTPSTGTAPAPGPTPVPASVPRPAA) is disordered. At serine 2 the chain carries N-acetylserine. The N-terminal arm stretch occupies residues 2 to 56 (SQVAKAAATTAVNPGPDGKGKGTPSTGTAPAPGPTPVPASVPRPAAKVGELPPGS). Residues 32–42 (APGPTPVPASV) are compositionally biased toward pro residues. 2 Beta/gamma crystallin 'Greek key' domains span residues 57–96 (YRLV…IVLS) and 97–141 (GPWV…RPIR). Residues 142–146 (MDSQE) are connecting peptide. 2 consecutive Beta/gamma crystallin 'Greek key' domains span residues 147-188 (HKIC…TVSS) and 189-231 (GTWV…RRLR). The interval 233–250 (RQWHQEGCFPVLTAEPPK) is C-terminal arm.

It belongs to the beta/gamma-crystallin family. As to quaternary structure, homo/heterodimer, or complexes of higher-order. The structure of beta-crystallin oligomers seems to be stabilized through interactions between the N-terminal arms. Specific cleavages in the N-terminal arm occur during lens maturation and give rise to truncated forms, leading to impaired oligomerization and protein insolubilization. The protease responsible for this partial degradation could be calpain II.

Its function is as follows. Crystallins are the dominant structural components of the vertebrate eye lens. In Rattus norvegicus (Rat), this protein is Beta-crystallin B1 (Crybb1).